Here is a 331-residue protein sequence, read N- to C-terminus: MEIIKISPRGYCYGVIDAMVIAKNASLDPNLPRPIHILGMIVHNKHVTDAFESIGIYTVDGANREEILDKITTGTVIFTAHGVSPSVKAKAAAKGLTTIDATCPDVLHTYNLILEKQAAGYEIIYIGKKGHPEPEGAYGTAPDVVHLVETKADIDALSLLSDNIFVTNQTTMSKWDVADLMDYIKEKFPKAIQHQEICMATQVRQEAVAVQAKGADLTIVVGDPRSNNTARLAQVSIEKAGTKAYRIADITELDIEWIKDAKKVAVTAGASTPTQLVREVLLFLEQFDAADKTTWKRAHNKDFERILPKMKNKYMAEKRRQRLAHLKNGGS.

Cysteine 12 provides a ligand contact to [4Fe-4S] cluster. Residues histidine 43 and histidine 81 each coordinate (2E)-4-hydroxy-3-methylbut-2-enyl diphosphate. The dimethylallyl diphosphate site is built by histidine 43 and histidine 81. Residues histidine 43 and histidine 81 each coordinate isopentenyl diphosphate. A [4Fe-4S] cluster-binding site is contributed by cysteine 103. Histidine 131 contributes to the (2E)-4-hydroxy-3-methylbut-2-enyl diphosphate binding site. Histidine 131 provides a ligand contact to dimethylallyl diphosphate. Residue histidine 131 participates in isopentenyl diphosphate binding. Glutamate 133 functions as the Proton donor in the catalytic mechanism. Threonine 170 lines the (2E)-4-hydroxy-3-methylbut-2-enyl diphosphate pocket. Residue cysteine 198 participates in [4Fe-4S] cluster binding. Serine 226, asparagine 228, and serine 271 together coordinate (2E)-4-hydroxy-3-methylbut-2-enyl diphosphate. The dimethylallyl diphosphate site is built by serine 226, asparagine 228, and serine 271. Residues serine 226, asparagine 228, and serine 271 each contribute to the isopentenyl diphosphate site.

It belongs to the IspH family. [4Fe-4S] cluster is required as a cofactor.

It carries out the reaction isopentenyl diphosphate + 2 oxidized [2Fe-2S]-[ferredoxin] + H2O = (2E)-4-hydroxy-3-methylbut-2-enyl diphosphate + 2 reduced [2Fe-2S]-[ferredoxin] + 2 H(+). The catalysed reaction is dimethylallyl diphosphate + 2 oxidized [2Fe-2S]-[ferredoxin] + H2O = (2E)-4-hydroxy-3-methylbut-2-enyl diphosphate + 2 reduced [2Fe-2S]-[ferredoxin] + 2 H(+). It participates in isoprenoid biosynthesis; dimethylallyl diphosphate biosynthesis; dimethylallyl diphosphate from (2E)-4-hydroxy-3-methylbutenyl diphosphate: step 1/1. The protein operates within isoprenoid biosynthesis; isopentenyl diphosphate biosynthesis via DXP pathway; isopentenyl diphosphate from 1-deoxy-D-xylulose 5-phosphate: step 6/6. In terms of biological role, catalyzes the conversion of 1-hydroxy-2-methyl-2-(E)-butenyl 4-diphosphate (HMBPP) into a mixture of isopentenyl diphosphate (IPP) and dimethylallyl diphosphate (DMAPP). Acts in the terminal step of the DOXP/MEP pathway for isoprenoid precursor biosynthesis. This chain is 4-hydroxy-3-methylbut-2-enyl diphosphate reductase, found in Listeria monocytogenes serotype 4b (strain CLIP80459).